Consider the following 471-residue polypeptide: Glutamate--tRNA ligase (471 aa).

The 'HIGH' region motif lies at 9-19; the sequence is PSPTGYLHVGG. Residues C98, C100, C125, and H127 each coordinate Zn(2+). Residues 237 to 241 carry the 'KMSKS' region motif; the sequence is KLSKR. An ATP-binding site is contributed by K240.

It belongs to the class-I aminoacyl-tRNA synthetase family. Glutamate--tRNA ligase type 1 subfamily. Monomer. Zn(2+) is required as a cofactor.

The protein localises to the cytoplasm. It catalyses the reaction tRNA(Glu) + L-glutamate + ATP = L-glutamyl-tRNA(Glu) + AMP + diphosphate. Functionally, catalyzes the attachment of glutamate to tRNA(Glu) in a two-step reaction: glutamate is first activated by ATP to form Glu-AMP and then transferred to the acceptor end of tRNA(Glu). The chain is Glutamate--tRNA ligase from Escherichia coli (strain SMS-3-5 / SECEC).